The sequence spans 540 residues: Zinc finger protein 768 (540 aa).

Disordered stretches follow at residues 1–166 (MERE…FEAQ) and 239–258 (TGALRGPGRRGGRARGGQGP). Ser-17, Ser-18, and Ser-23 each carry phosphoserine. Phosphotyrosine is present on Tyr-27. Ser-33 carries the phosphoserine modification. Residues 34–53 (ENEEEEISQQEGSGDYEVEE) show a composition bias toward acidic residues. A phosphoserine mark is found at Ser-62, Ser-69, Ser-76, Ser-83, Ser-90, Ser-97, Ser-104, Ser-107, Ser-111, Ser-118, and Ser-125. Residues 62-77 (SPGFEPQSPEFEPQSP) show a composition bias toward low complexity. Residues 107–119 (SDSQSPEFESQSP) show a composition bias toward polar residues. Phosphotyrosine is present on Tyr-128. Ser-132 bears the Phosphoserine mark. A Phosphotyrosine modification is found at Tyr-135. Residue Ser-139 is modified to Phosphoserine. Tyr-142 carries the phosphotyrosine modification. 2 positions are modified to phosphoserine: Ser-144 and Ser-147. The span at 149-166 (YESQNTELKTQSPEFEAQ) shows a compositional bias: polar residues. A Phosphothreonine modification is found at Thr-158. Ser-160 is modified (phosphoserine). The C2H2-type 1 zinc-finger motif lies at 261–283 (NICGICGKSFGRGSTLIQHQRIH). At Thr-284 the chain carries Phosphothreonine. A Phosphotyrosine modification is found at Tyr-289. C2H2-type zinc fingers lie at residues 289–311 (YKCEVCSKAFSQSSDLIKHQRTH), 317–339 (YKCPRCGKAFADSSYLLRHQRTH), 345–367 (YKCPHCGKAFGDSSYLLRHQRTH), and 373–395 (YSCTECGKCYSQNSSLRSHQRVH). Phosphoserine occurs at positions 295 and 299. At Thr-396 the chain carries Phosphothreonine. 5 C2H2-type zinc fingers span residues 401-423 (FSCGICGKSFSQRSALIPHARSH), 429-451 (FKCPECGKRFGQSSVLAIHARTH), 457-479 (YSCPDCGKTFNRSSTLIQHQRSH), 485-507 (YRCAVCGKGFCRSSTLLQHHRVH), and 513-535 (YKCDDCGKAFSQSSDLIRHQRTH). Ser-442 is modified (phosphoserine).

It belongs to the krueppel C2H2-type zinc-finger protein family. As to quaternary structure, interacts (via zinc-finger domains) with TP53 (via N-terminus); interaction might be facilitated by TP53 oligomerization state. Interacts with ELP3. May be phosphorylated at residue 'Ser-5' of the tandem heptapeptide repeats in the N-terminus. Phosphorylation might be increased upon RAS pathway activation and negatively regulate protein stability.

The protein resides in the nucleus. The protein localises to the chromosome. Its function is as follows. Binds to mammalian-wide interspersed repeat (MIRs) sequences in euchromatin and promoter regions of genes at the consensus sequence 5'-GCTGTGTG-[N20]-CCTCTCTG-3', consisting of two anchor regions connected by a linker region; the linker region probably does not contribute to the binding specificity. Required for cell homeostasis. May be involved in transcriptional regulation. In Homo sapiens (Human), this protein is Zinc finger protein 768 (ZNF768).